Reading from the N-terminus, the 217-residue chain is Probable GTP-binding protein EngB (217 aa).

The region spanning G33–R217 is the EngB-type G domain. GTP-binding positions include G41 to S48, G68 to E72, D95 to G98, T162 to D165, and T196 to S198. Positions 48 and 70 each coordinate Mg(2+).

The protein belongs to the TRAFAC class TrmE-Era-EngA-EngB-Septin-like GTPase superfamily. EngB GTPase family. Requires Mg(2+) as cofactor.

Functionally, necessary for normal cell division and for the maintenance of normal septation. The polypeptide is Probable GTP-binding protein EngB (Rhizobium meliloti (strain 1021) (Ensifer meliloti)).